The primary structure comprises 268 residues: Ribosomal RNA small subunit methyltransferase A (268 aa).

Residues asparagine 18, leucine 20, glycine 45, glutamate 66, aspartate 91, and asparagine 112 each contribute to the S-adenosyl-L-methionine site.

The protein belongs to the class I-like SAM-binding methyltransferase superfamily. rRNA adenine N(6)-methyltransferase family. RsmA subfamily.

Its subcellular location is the cytoplasm. It carries out the reaction adenosine(1518)/adenosine(1519) in 16S rRNA + 4 S-adenosyl-L-methionine = N(6)-dimethyladenosine(1518)/N(6)-dimethyladenosine(1519) in 16S rRNA + 4 S-adenosyl-L-homocysteine + 4 H(+). Its function is as follows. Specifically dimethylates two adjacent adenosines (A1518 and A1519) in the loop of a conserved hairpin near the 3'-end of 16S rRNA in the 30S particle. May play a critical role in biogenesis of 30S subunits. In Pseudoalteromonas translucida (strain TAC 125), this protein is Ribosomal RNA small subunit methyltransferase A.